Here is a 242-residue protein sequence, read N- to C-terminus: Probable transcriptional regulatory protein lhv_0777 (242 aa).

Residues 1-22 (MSGHSKWHNIQGRKNAQDAKRG) form a disordered region.

It belongs to the TACO1 family.

Its subcellular location is the cytoplasm. The sequence is that of Probable transcriptional regulatory protein lhv_0777 from Lactobacillus helveticus (strain DPC 4571).